A 124-amino-acid polypeptide reads, in one-letter code: Small ribosomal subunit protein uS12c (124 aa).

This sequence belongs to the universal ribosomal protein uS12 family. In terms of assembly, part of the 30S ribosomal subunit.

Its subcellular location is the plastid. The protein localises to the chloroplast. Functionally, with S4 and S5 plays an important role in translational accuracy. Located at the interface of the 30S and 50S subunits. This Cyanidium caldarium (Red alga) protein is Small ribosomal subunit protein uS12c (rps12).